Reading from the N-terminus, the 238-residue chain is MFPAQEEADRTVFVGNLEARVREEILYELFLQAGPLTKVTLCKDRDGKPKSFGFVCFKHPESVSYAIALLNGIRLYGRPINVQYRFGSSRSSEPANQSFESCAKINSHSFRNDEMAGRPSFPVPFFPITSAALPQEYFFFQKMPWYAHSPVLQPPFCEMPAPLPNSVPGSCALNHSPGPEAGPSSYEWTHQPPSDPDLYPRNKRKRQRPDSDSDSSSEDKRGNEGSQKCRKCKKKKRY.

One can recognise an RRM domain in the interval 10-87 (RTVFVGNLEA…RPINVQYRFG (78 aa)). The interval 172–238 (ALNHSPGPEA…CRKCKKKKRY (67 aa)) is disordered. Positions 202–237 (NKRKRQRPDSDSDSSSEDKRGNEGSQKCRKCKKKKR) match the Bipartite nuclear localization signal motif. The segment covering 228–238 (KCRKCKKKKRY) has biased composition (basic residues).

As to quaternary structure, homodimer. Selectively expressed in brain, cerebellum and testis, and to a lower extent in kidney.

The protein localises to the nucleus. It localises to the nucleoplasm. The protein resides in the nucleus speckle. Functionally, tissue-specific splicing factor with potential implication in the regulation of alternative splicing during neuron and germ cell differentiation. Antagonizes SRSF1-mediated BCL-X splicing. May affect the choice of alternative 5' splice sites by binding to specific sequences in exons and antagonizing the SR protein SRSF1. The sequence is that of Splicing regulator RBM11 (Rbm11) from Mus musculus (Mouse).